The following is a 98-amino-acid chain: Large ribosomal subunit protein uL23 (98 aa).

It belongs to the universal ribosomal protein uL23 family. In terms of assembly, part of the 50S ribosomal subunit. Contacts protein L29, and trigger factor when it is bound to the ribosome.

Its function is as follows. One of the early assembly proteins it binds 23S rRNA. One of the proteins that surrounds the polypeptide exit tunnel on the outside of the ribosome. Forms the main docking site for trigger factor binding to the ribosome. The polypeptide is Large ribosomal subunit protein uL23 (Legionella pneumophila (strain Paris)).